The primary structure comprises 346 residues: UDP-3-O-acylglucosamine N-acyltransferase (346 aa).

His-253 serves as the catalytic Proton acceptor.

It belongs to the transferase hexapeptide repeat family. LpxD subfamily. In terms of assembly, homotrimer.

The catalysed reaction is a UDP-3-O-[(3R)-3-hydroxyacyl]-alpha-D-glucosamine + a (3R)-hydroxyacyl-[ACP] = a UDP-2-N,3-O-bis[(3R)-3-hydroxyacyl]-alpha-D-glucosamine + holo-[ACP] + H(+). The protein operates within bacterial outer membrane biogenesis; LPS lipid A biosynthesis. Its function is as follows. Catalyzes the N-acylation of UDP-3-O-acylglucosamine using 3-hydroxyacyl-ACP as the acyl donor. Is involved in the biosynthesis of lipid A, a phosphorylated glycolipid that anchors the lipopolysaccharide to the outer membrane of the cell. The protein is UDP-3-O-acylglucosamine N-acyltransferase of Rickettsia typhi (strain ATCC VR-144 / Wilmington).